We begin with the raw amino-acid sequence, 211 residues long: MPDDFKIPRATLKRLPLYYRLVSILKGKGIDRVNSKTISEALQIDSATIRRDFSYFGELGKKGYGYNIDSMLEFFKSELSESDQIKIAIIGIGNLGRALLTYNFSIHDEMTITEAFDIRPDIIGENIGDVVVKHSDDIKTTLESEDIDVVILTTPDNVAQQVADELVKAGVKGILNFTPRRIKTPQDVQVHHIDFGIELQSLLFFMKNYSK.

A DNA-binding region (H-T-H motif) is located at residues 17-56 (LYYRLVSILKGKGIDRVNSKTISEALQIDSATIRRDFSYF). 91 to 96 (GIGNLG) is an NAD(+) binding site.

The protein belongs to the transcriptional regulatory Rex family. As to quaternary structure, homodimer.

Its subcellular location is the cytoplasm. Modulates transcription in response to changes in cellular NADH/NAD(+) redox state. In Staphylococcus epidermidis (strain ATCC 12228 / FDA PCI 1200), this protein is Redox-sensing transcriptional repressor Rex.